We begin with the raw amino-acid sequence, 204 residues long: Thymidylate kinase (204 aa).

13 to 20 contributes to the ATP binding site; that stretch reads GIDGSGKS.

This sequence belongs to the thymidylate kinase family.

The catalysed reaction is dTMP + ATP = dTDP + ADP. Its function is as follows. Phosphorylation of dTMP to form dTDP in both de novo and salvage pathways of dTTP synthesis. This Leptospira interrogans serogroup Icterohaemorrhagiae serovar copenhageni (strain Fiocruz L1-130) protein is Thymidylate kinase.